The following is a 255-amino-acid chain: Cytochrome b561 and DOMON domain-containing protein At5g48750 (255 aa).

Residues 1–27 form the signal peptide; it reads MFLSSRTIFVGLCFLFVLAPCFTRATT. The DOMON domain occupies 54 to 169; that stretch reads LDSFLHYSYV…TVVNHLWQDG (116 aa). Residues 176 to 255 form the Cytochrome b561 domain; sequence RLGMHAMSGN…DPTWFYILIL (80 aa). A helical membrane pass occupies residues 216 to 236; that stretch reads IHGLVNAVCWGIFIPIGVMAA.

It localises to the membrane. In Arabidopsis thaliana (Mouse-ear cress), this protein is Cytochrome b561 and DOMON domain-containing protein At5g48750.